A 130-amino-acid polypeptide reads, in one-letter code: Small ribosomal subunit protein uS8 (130 aa).

It belongs to the universal ribosomal protein uS8 family. Part of the 30S ribosomal subunit.

In terms of biological role, one of the primary rRNA binding proteins, it binds directly to 16S rRNA central domain where it helps coordinate assembly of the platform of the 30S subunit. The sequence is that of Small ribosomal subunit protein uS8 from Methanoculleus marisnigri (strain ATCC 35101 / DSM 1498 / JR1).